A 136-amino-acid chain; its full sequence is uncharacterized protein (136 aa).

Residues 7 to 27 (ANVLAILLVSLFLINGLVFLS) traverse the membrane as a helical segment.

The protein localises to the membrane. This is an uncharacterized protein from Mycoplasma pneumoniae (strain ATCC 29342 / M129 / Subtype 1) (Mycoplasmoides pneumoniae).